The following is a 201-amino-acid chain: Guanylate kinase (201 aa).

A Guanylate kinase-like domain is found at 10–195 (GKIIILSGPS…CVEEVKNILK (186 aa)). An ATP-binding site is contributed by 17 to 24 (GPSGVGKG).

It belongs to the guanylate kinase family.

It localises to the cytoplasm. It catalyses the reaction GMP + ATP = GDP + ADP. Its function is as follows. Essential for recycling GMP and indirectly, cGMP. This Mycoplasma mobile (strain ATCC 43663 / 163K / NCTC 11711) (Mesomycoplasma mobile) protein is Guanylate kinase.